The primary structure comprises 87 residues: Selenoprotein W (87 aa).

Residues cysteine 10–selenocysteine 13 constitute a cross-link (cysteinyl-selenocysteine (Cys-Sec); redox-active). Position 13 (selenocysteine 13) is a non-standard amino acid, selenocysteine. An S-glutathionyl cysteine modification is found at cysteine 37.

The protein belongs to the SelWTH family. Selenoprotein W subfamily. Interacts with DPYSL2, PRDX1, YWHAB, YWHAG, HSP70 and HSP90. Highest levels detected in skeletal muscle, tongue, heart and brain. Expressed at significantly higher levels in female skeletal muscle than in male and at slightly higher levels in female cardiac muscle than in male (at protein level). Also detected at low levels in liver.

The protein resides in the cytoplasm. In terms of biological role, plays a role as a glutathione (GSH)-dependent antioxidant. May be involved in a redox-related process. May play a role in the myopathies of selenium deficiency. This chain is Selenoprotein W, found in Macaca mulatta (Rhesus macaque).